Reading from the N-terminus, the 447-residue chain is Glucose-6-phosphate isomerase (447 aa).

Glu-287 serves as the catalytic Proton donor. Active-site residues include His-308 and Lys-422.

This sequence belongs to the GPI family.

It localises to the cytoplasm. It catalyses the reaction alpha-D-glucose 6-phosphate = beta-D-fructose 6-phosphate. Its pathway is carbohydrate biosynthesis; gluconeogenesis. It participates in carbohydrate degradation; glycolysis; D-glyceraldehyde 3-phosphate and glycerone phosphate from D-glucose: step 2/4. In terms of biological role, catalyzes the reversible isomerization of glucose-6-phosphate to fructose-6-phosphate. This chain is Glucose-6-phosphate isomerase, found in Heliobacterium modesticaldum (strain ATCC 51547 / Ice1).